Consider the following 558-residue polypeptide: Mitochondrial nucleoid-associated protein 1 (558 aa).

The Extracellular segment spans residues 1–527; sequence MGAAEPRMEV…VQCNTTIKKS (527 aa). Disordered regions lie at residues 29-88, 130-205, and 222-269; these read KMRG…SWTA, LQRV…KLGT, and LSDR…KTQK. Positions 36–45 are enriched in polar residues; the sequence is SADQNVSQSK. Basic and acidic residues predominate over residues 51-81; it reads QKEKSPTRDLTRAKEKELEVDRPKRAVKAET. Polar residues-rich tracts occupy residues 131–144 and 187–197; these read QRVTTPWSPASDAT and SSTQPHANPAT. The chain crosses the membrane as a helical span at residues 528-548; that stretch reads GVGGLTMLFAGYFILCCNWSF. Topologically, residues 549–558 are cytoplasmic; it reads KHLKLQHWRK.

Its subcellular location is the mitochondrion inner membrane. The protein resides in the mitochondrion matrix. It localises to the mitochondrion nucleoid. Critical regulator of mitochondrial DNA (mtDNA) abundance. Binds dsDNA throughout the mitochondrial genome without sequence specificity and controls mtDNA copy number by promoting its replication. Also plays important roles in mitochondrial metabolism and cell proliferation. The protein is Mitochondrial nucleoid-associated protein 1 of Mus musculus (Mouse).